The following is a 334-amino-acid chain: Lipoyl synthase (334 aa).

[4Fe-4S] cluster contacts are provided by Cys71, Cys76, Cys82, Cys97, Cys101, Cys104, and Ser312. Positions 83–301 (WSHGTATFMV…RQEGLRRGFR (219 aa)) constitute a Radical SAM core domain.

Belongs to the radical SAM superfamily. Lipoyl synthase family. It depends on [4Fe-4S] cluster as a cofactor.

The protein localises to the cytoplasm. It catalyses the reaction [[Fe-S] cluster scaffold protein carrying a second [4Fe-4S](2+) cluster] + N(6)-octanoyl-L-lysyl-[protein] + 2 oxidized [2Fe-2S]-[ferredoxin] + 2 S-adenosyl-L-methionine + 4 H(+) = [[Fe-S] cluster scaffold protein] + N(6)-[(R)-dihydrolipoyl]-L-lysyl-[protein] + 4 Fe(3+) + 2 hydrogen sulfide + 2 5'-deoxyadenosine + 2 L-methionine + 2 reduced [2Fe-2S]-[ferredoxin]. It functions in the pathway protein modification; protein lipoylation via endogenous pathway; protein N(6)-(lipoyl)lysine from octanoyl-[acyl-carrier-protein]: step 2/2. Its function is as follows. Catalyzes the radical-mediated insertion of two sulfur atoms into the C-6 and C-8 positions of the octanoyl moiety bound to the lipoyl domains of lipoate-dependent enzymes, thereby converting the octanoylated domains into lipoylated derivatives. The polypeptide is Lipoyl synthase (Halorhodospira halophila (strain DSM 244 / SL1) (Ectothiorhodospira halophila (strain DSM 244 / SL1))).